Consider the following 389-residue polypeptide: uncharacterized protein (389 aa).

4 disordered regions span residues 119–156 (SSLF…GENQ), 180–233 (PTSK…SSMG), 294–321 (SIPS…TSRT), and 362–389 (PEDM…EIKV). The span at 137–155 (SPSTINIEKNRHSSNSGEN) shows a compositional bias: polar residues. Residues 190–204 (DDGDEEDDTDDEGEA) are compositionally biased toward acidic residues.

This is an uncharacterized protein from Caenorhabditis elegans.